The sequence spans 259 residues: Imidazole glycerol phosphate synthase subunit HisF (259 aa).

Active-site residues include Asp-11 and Asp-130.

This sequence belongs to the HisA/HisF family. In terms of assembly, heterodimer of HisH and HisF.

It localises to the cytoplasm. It carries out the reaction 5-[(5-phospho-1-deoxy-D-ribulos-1-ylimino)methylamino]-1-(5-phospho-beta-D-ribosyl)imidazole-4-carboxamide + L-glutamine = D-erythro-1-(imidazol-4-yl)glycerol 3-phosphate + 5-amino-1-(5-phospho-beta-D-ribosyl)imidazole-4-carboxamide + L-glutamate + H(+). The protein operates within amino-acid biosynthesis; L-histidine biosynthesis; L-histidine from 5-phospho-alpha-D-ribose 1-diphosphate: step 5/9. IGPS catalyzes the conversion of PRFAR and glutamine to IGP, AICAR and glutamate. The HisF subunit catalyzes the cyclization activity that produces IGP and AICAR from PRFAR using the ammonia provided by the HisH subunit. The protein is Imidazole glycerol phosphate synthase subunit HisF of Lactococcus lactis subsp. cremoris (strain SK11).